Here is a 491-residue protein sequence, read N- to C-terminus: Diacylglycerol O-acyltransferase 1 (491 aa).

The tract at residues 1–60 (MGDRGGAGGTRRRRTGSRPSSHGGGGPAAAEEEVRDAAAGPDMGAAGDAPAPAPSKDADD) is disordered. Topologically, residues 1–86 (MGDRGGAGGT…SLFSSDSGFN (86 aa)) are cytoplasmic. An involved in homomerization region spans residues 1 to 94 (MGDRGGAGGT…FNNYRGILNW (94 aa)). Residues Ser-20 and Ser-21 each carry the phosphoserine modification. Residues 37 to 50 (AAAGPDMGAAGDAP) are compositionally biased toward low complexity. The helical transmembrane segment at 87-121 (NYRGILNWCVVMLILSNARLFLENLIKYGILVDPI) threads the bilayer. Over 122–133 (QVVSLFLKDPYS) the chain is Lumenal. The tract at residues 122-133 (QVVSLFLKDPYS) is extracellular loop 1 (EL1). Residues 134-159 (WPAPCLVIAANVFAVAAFQVEKRLAV) form a helical membrane-spanning segment. Residues 134–491 (WPAPCLVIAA…LNYEAPVAGA (358 aa)) form an MBOAT fold region. Over 160–164 (GALTE) the chain is Cytoplasmic. Residues 165–187 (QAGLLLHVANLATILCFPAAVVL) form a helical membrane-spanning segment. At 188–194 (LVESITP) the chain is on the lumenal side. The helical transmembrane segment at 195 to 226 (VGSLLALMVHTILFLKLFSYRDVNLWCRRARA) threads the bilayer. Residues 227–276 (KAASAGKRASSAAAPHTVSYPDNLTYRDLYYFLFAPTLCYELNFPRSPRI) lie on the Cytoplasmic side of the membrane. Positions 227 to 279 (KAASAGKRASSAAAPHTVSYPDNLTYRDLYYFLFAPTLCYELNFPRSPRIRKR) are intracellular loop 1 (IL1). A helical membrane pass occupies residues 277–311 (RKRFLLRRILEMLFFTQLQVGLIQQWMVPTIQNSM). The Lumenal segment spans residues 312–318 (KPFKDMD). The chain crosses the membrane as a helical span at residues 319 to 356 (YSRIIERLLKLAVPNHLIWLIFFYWLFHSCLNAVAELM). The Cytoplasmic segment spans residues 357 to 402 (QFGDREFYRDWWNSESVTYFWQNWNIPVHKWCIRHFYKPMLRRGSS). Positions 357-402 (QFGDREFYRDWWNSESVTYFWQNWNIPVHKWCIRHFYKPMLRRGSS) are intracellular loop 2 (IL2). The FYXDWWN motif motif lies at 363–369 (FYRDWWN). An acyl-CoA contacts are provided by residues 377–385 (WQNWNIPVH), Tyr-393, and Arg-407. Residues 383 to 397 (PVHKWCIRHFYKPML) form an amphipathic helix (AH) region. A helical transmembrane segment spans residues 403-423 (RWMARIGVFLASAFFHEYLVS). His-418 is an active-site residue. Residues 424 to 431 (VPLRMFRL) are Lumenal-facing. The chain crosses the membrane as a helical span at residues 432–450 (WAFTGMMAQIPLAWFVGRF). Over 451–452 (FQ) the chain is Cytoplasmic. A helical membrane pass occupies residues 453 to 484 (GNYGNAAVWLTLIIGQPIAVLMYVHDYYVLNY). Residue Tyr-480 coordinates an acyl-CoA. Over 485 to 491 (EAPVAGA) the chain is Lumenal.

This sequence belongs to the membrane-bound acyltransferase family. Sterol o-acyltransferase subfamily. As to quaternary structure, homodimer or homotetramer; both forms have similar enzymatic activities.

Its subcellular location is the endoplasmic reticulum membrane. The catalysed reaction is an acyl-CoA + a 1,2-diacyl-sn-glycerol = a triacyl-sn-glycerol + CoA. It carries out the reaction all-trans-retinol + an acyl-CoA = an all-trans-retinyl ester + CoA. It catalyses the reaction 2-(9Z-octadecenoyl)-glycerol + (9Z)-octadecenoyl-CoA = 1,2-di-(9Z-octadecenoyl)-sn-glycerol + CoA. The enzyme catalyses 1,2-di-(9Z-octadecenoyl)-sn-glycerol + (9Z)-octadecenoyl-CoA = 1,2,3-tri-(9Z-octadecenoyl)-glycerol + CoA. The catalysed reaction is all-trans-retinol + hexadecanoyl-CoA = all-trans-retinyl hexadecanoate + CoA. It carries out the reaction 1-O-(9Z-octadecenyl)-glycerol + (9Z)-octadecenoyl-CoA = 1-O-(9Z-octadecyl)-3-(9Z-octadecenoyl)-glycerol + CoA. It catalyses the reaction 1-O-(9Z-octadecyl)-3-(9Z-octadecenoyl)-glycerol + (9Z)-octadecenoyl-CoA = 1-O-(9Z-octadecenyl)-2,3-di-(9Z-octadecenoyl)glycerol + CoA. The enzyme catalyses 1-(9Z-octadecenoyl)-glycerol + (9Z)-octadecenoyl-CoA = 1,2-di-(9Z-octadecenoyl)-glycerol + CoA. The catalysed reaction is 1,2-di-(9Z-octadecenoyl)-glycerol + (9Z)-octadecenoate + H(+) = 1,2,3-tri-(9Z-octadecenoyl)-glycerol + H2O. It carries out the reaction 1-octadecanoyl-2-(5Z,8Z,11Z,14Z-eicosatetraenoyl)-sn-glycerol + (9Z)-octadecenoyl-CoA = 1-octadecanoyl-2-(5Z,8Z,11Z,14Z)-eicosatetraenoyl-3-(9Z)-octadecenoyl-sn-glycerol + CoA. It catalyses the reaction hexadecane-1,2-diol + 2 hexadecanoyl-CoA = 1,2-O,O-dihexadecanoyl-1,2-hexadecanediol + 2 CoA. The enzyme catalyses hexadecane-1,2-diol + hexadecanoyl-CoA = 2-hydroxyhexadecyl hexadecanoate + CoA. The catalysed reaction is 2-(9Z-octadecenoyl)-glycerol + hexadecanoyl-CoA = 1-hexadecanoyl-2-(9Z-octadecenoyl)-sn-glycerol + CoA. It carries out the reaction 1,2-di-(9Z-octadecenoyl)-sn-glycerol + hexadecanoyl-CoA = 1,2-di-(9Z)-octadecenoyl-3-hexadecanoyl-sn-glycerol + CoA. It catalyses the reaction hexadecan-1-ol + hexadecanoyl-CoA = hexadecanyl hexadecanoate + CoA. The enzyme catalyses 13-cis-retinol + hexadecanoyl-CoA = 13-cis-retinyl hexadecanoate + CoA. The catalysed reaction is 1,3-di-(9Z-octadecenoyl)-glycerol + (9Z)-octadecenoyl-CoA = 1,2,3-tri-(9Z-octadecenoyl)-glycerol + CoA. It carries out the reaction 2,3-di-(9Z)-octadecenoyl-sn-glycerol + (9Z)-octadecenoyl-CoA = 1,2,3-tri-(9Z-octadecenoyl)-glycerol + CoA. It participates in lipid metabolism; glycerolipid metabolism. Its function is as follows. Catalyzes the terminal and only committed step in triacylglycerol synthesis by using diacylglycerol and fatty acyl CoA as substrates. Highly expressed in epithelial cells of the small intestine and its activity is essential for the absorption of dietary fats. In liver, plays a role in esterifying exogenous fatty acids to glycerol, and is required to synthesize fat for storage. Also present in female mammary glands, where it produces fat in the milk. May be involved in VLDL (very low density lipoprotein) assembly. In contrast to DGAT2 it is not essential for survival. Functions as the major acyl-CoA retinol acyltransferase (ARAT) in the skin, where it acts to maintain retinoid homeostasis and prevent retinoid toxicity leading to skin and hair disorders. Exhibits additional acyltransferase activities, includin acyl CoA:monoacylglycerol acyltransferase (MGAT), wax monoester and wax diester synthases. Also able to use 1-monoalkylglycerol (1-MAkG) as an acyl acceptor for the synthesis of monoalkyl-monoacylglycerol (MAMAG). The polypeptide is Diacylglycerol O-acyltransferase 1 (DGAT1) (Chlorocebus aethiops (Green monkey)).